The following is a 206-amino-acid chain: Holliday junction branch migration complex subunit RuvA (206 aa).

The segment at 1–64 is domain I; that stretch reads MIGRLRGNLL…EDAQLLYGFN (64 aa). Residues 65 to 143 are domain II; that stretch reads TKKERALFRE…GWGAGDLFTP (79 aa). Residues 144–157 form a flexible linker region; the sequence is ADTTSMDDASDLIS. Residues 158-206 form a domain III region; the sequence is SPQSAQDEAVSALISLGYKPVQASKMVSQVAKPDMTSESLIRESLKSMI.

This sequence belongs to the RuvA family. Homotetramer. Forms an RuvA(8)-RuvB(12)-Holliday junction (HJ) complex. HJ DNA is sandwiched between 2 RuvA tetramers; dsDNA enters through RuvA and exits via RuvB. An RuvB hexamer assembles on each DNA strand where it exits the tetramer. Each RuvB hexamer is contacted by two RuvA subunits (via domain III) on 2 adjacent RuvB subunits; this complex drives branch migration. In the full resolvosome a probable DNA-RuvA(4)-RuvB(12)-RuvC(2) complex forms which resolves the HJ.

The protein localises to the cytoplasm. Its function is as follows. The RuvA-RuvB-RuvC complex processes Holliday junction (HJ) DNA during genetic recombination and DNA repair, while the RuvA-RuvB complex plays an important role in the rescue of blocked DNA replication forks via replication fork reversal (RFR). RuvA specifically binds to HJ cruciform DNA, conferring on it an open structure. The RuvB hexamer acts as an ATP-dependent pump, pulling dsDNA into and through the RuvAB complex. HJ branch migration allows RuvC to scan DNA until it finds its consensus sequence, where it cleaves and resolves the cruciform DNA. This chain is Holliday junction branch migration complex subunit RuvA, found in Aliivibrio salmonicida (strain LFI1238) (Vibrio salmonicida (strain LFI1238)).